The sequence spans 551 residues: (6-4)DNA photolyase (551 aa).

The region spanning A13–L157 is the Photolyase/cryptochrome alpha/beta domain. E254 lines the phosphate pocket. FAD-binding positions include K255, T268–S272, Q309–R313, W372–H375, R378, D407–D409, and N413. W312 contributes to the DNA binding site. The tract at residues H374–H379 is interaction with DNA. DNA is bound at residue W419. The tract at residues Y508–S551 is disordered. Positions R512–K522 are enriched in basic and acidic residues. Polar residues predominate over residues A533–T544.

It belongs to the DNA photolyase class-1 family. FAD serves as cofactor.

The catalysed reaction is (6-4) photoproduct (in DNA) = 2 pyrimidine residues (in DNA).. In terms of biological role, involved in repair of UV radiation-induced DNA damage. Catalyzes the photoreactivation of pyrimidine [6-4] pyrimidone photoproduct (6-4 products). This is (6-4)DNA photolyase (UVR3) from Oryza sativa subsp. japonica (Rice).